A 117-amino-acid polypeptide reads, in one-letter code: Large ribosomal subunit protein bL20 (117 aa).

Belongs to the bacterial ribosomal protein bL20 family.

Functionally, binds directly to 23S ribosomal RNA and is necessary for the in vitro assembly process of the 50S ribosomal subunit. It is not involved in the protein synthesizing functions of that subunit. In Natranaerobius thermophilus (strain ATCC BAA-1301 / DSM 18059 / JW/NM-WN-LF), this protein is Large ribosomal subunit protein bL20.